A 612-amino-acid polypeptide reads, in one-letter code: RNA-binding protein MRN1 (612 aa).

Residues 1–28 (MVVSYNNNNNNNNNNNNNNISNNNNNNN) are compositionally biased toward low complexity. Disordered stretches follow at residues 1 to 57 (MVVS…TYAS) and 105 to 125 (PTQF…SQEQ). Polar residues-rich tracts occupy residues 42–57 (YQQS…TYAS) and 115–125 (DSQQQRFSQEQ). RRM domains are found at residues 201–274 (RTVY…WGKP), 292–379 (RNVY…KTQQ), 431–504 (RTVY…WGKH), and 522–602 (RNVY…FGKD).

It localises to the cytoplasm. RNA-binding protein that binds specific categories of mRNAs, including those that contain upstream open reading frames (uORFs) and internal ribosome entry sites (IRES). Probably involved in translational regulation. The chain is RNA-binding protein MRN1 (MRN1) from Saccharomyces cerevisiae (strain ATCC 204508 / S288c) (Baker's yeast).